Here is a 205-residue protein sequence, read N- to C-terminus: Keratin-associated protein 4-6 (205 aa).

Tandem repeats lie at residues 20–24 (CCRPS), 25–29 (CCQTT), 30–34 (CCRTT), 35–39 (CCRPS), 40–44 (CCVSS), 45–49 (CCRPQ), 50–54 (CCQSV), 55–59 (CCQPT), 60–64 (CCRPS), 65–68 (CCPS), 69–73 (CCQTT), 74–78 (CCRTT), 79–83 (CCRPS), 84–88 (CCVSS), 89–93 (CCRPQ), 94–98 (CCQSV), 99–103 (CCQPT), 104–108 (CCRPS), 114–118 (CCRPS), 119–123 (CCVSR), 124–128 (CCRSQ), 129–133 (CCQSV), 134–138 (CCQPT), 139–143 (CCRPS), 144–148 (CCISS), 149–153 (CCRPS), 154–158 (CCESS), 159–163 (CCRPC), 164–168 (CCRPC), and 169–173 (CCLRP). Residues 20–173 (CCRPSCCQTT…CCRPCCCLRP (154 aa)) form a 30 X 5 AA repeats of C-C-[IRQVEL]-[SPTR]-[STVQRCP] region.

Belongs to the KRTAP type 4 family. Interacts with hair keratins. In terms of tissue distribution, expressed in the hair follicles.

In the hair cortex, hair keratin intermediate filaments are embedded in an interfilamentous matrix, consisting of hair keratin-associated proteins (KRTAP), which are essential for the formation of a rigid and resistant hair shaft through their extensive disulfide bond cross-linking with abundant cysteine residues of hair keratins. The matrix proteins include the high-sulfur and high-glycine-tyrosine keratins. The sequence is that of Keratin-associated protein 4-6 (KRTAP4-6) from Homo sapiens (Human).